The primary structure comprises 188 residues: ATP-dependent protease subunit HslV (188 aa).

Thr-14 is an active-site residue. Ala-173, Cys-176, and Thr-179 together coordinate Na(+).

It belongs to the peptidase T1B family. HslV subfamily. In terms of assembly, a double ring-shaped homohexamer of HslV is capped on each side by a ring-shaped HslU homohexamer. The assembly of the HslU/HslV complex is dependent on binding of ATP.

It is found in the cytoplasm. The enzyme catalyses ATP-dependent cleavage of peptide bonds with broad specificity.. With respect to regulation, allosterically activated by HslU binding. Its function is as follows. Protease subunit of a proteasome-like degradation complex believed to be a general protein degrading machinery. This chain is ATP-dependent protease subunit HslV, found in Caulobacter vibrioides (strain ATCC 19089 / CIP 103742 / CB 15) (Caulobacter crescentus).